Consider the following 718-residue polypeptide: Protein ENHANCED DISEASE RESISTANCE 2 (718 aa).

The 108-residue stretch at 3-110 (KVVYEGWMVR…WKEKIESVID (108 aa)) folds into the PH domain. Residues 134-174 (TGRTASSSDHESQFSAAEDEEDSRRSLMRRTTIGNGPPESV) are disordered. The region spanning 180-392 (EFDAELANQN…VAGLREWFSQ (213 aa)) is the START domain. The tract at residues 437 to 483 (RNSLLMDEDSDDDDEFQIAESEQEPETSKPETDVKRPEEEPAHNIDL) is disordered. The segment covering 442 to 461 (MDEDSDDDDEFQIAESEQEP) has biased composition (acidic residues). Residues 462–479 (ETSKPETDVKRPEEEPAH) show a composition bias toward basic and acidic residues. Residues 664–684 (GVLGLVIGVITSLVVEMAFLV) traverse the membrane as a helical segment.

In terms of tissue distribution, expressed ubiquitously in all tissues and organs, including leaves, roots, flowers, stems and siliques.

The protein resides in the endoplasmic reticulum membrane. It is found in the cell membrane. The protein localises to the endosome membrane. In terms of biological role, negative regulator of the salicylic acid- (SA-) mediated resistance to pathogens, including the biotrophic powdery mildew pathogens Golovinomyces cichoracearum and Blumeria graminis, and the downy mildew pathogen Hyaloperonospora parasitica, probably by limiting the initiation of cell death and the establishment of the hypersensitive response (HR). Prevents ethylene-induced senescence. Binds to phosphatidylinositol-4-phosphate (PtdIns(4)P) in vitro. The polypeptide is Protein ENHANCED DISEASE RESISTANCE 2 (EDR2) (Arabidopsis thaliana (Mouse-ear cress)).